Reading from the N-terminus, the 238-residue chain is U2 small nuclear ribonucleoprotein A' (238 aa).

LRR repeat units lie at residues 19-40 (KQVT…GITK), 42-63 (TYEV…PRLK), 64-84 (NLKV…DKLP), and 89-110 (HLQS…RILC). The region spanning 123 to 161 (NPITDSPNYRYFIVWLIPTLKVLDFSKVKQKELVKAKEL) is the LRRCT domain.

This sequence belongs to the U2 small nuclear ribonucleoprotein A family. In terms of assembly, associated with the spliceosome.

Its subcellular location is the nucleus. Functionally, involved in pre-mRNA splicing. This is U2 small nuclear ribonucleoprotein A' (LEA1) from Debaryomyces hansenii (strain ATCC 36239 / CBS 767 / BCRC 21394 / JCM 1990 / NBRC 0083 / IGC 2968) (Yeast).